Reading from the N-terminus, the 119-residue chain is Large ribosomal subunit protein bL20 (119 aa).

Belongs to the bacterial ribosomal protein bL20 family.

Its function is as follows. Binds directly to 23S ribosomal RNA and is necessary for the in vitro assembly process of the 50S ribosomal subunit. It is not involved in the protein synthesizing functions of that subunit. This Clostridium beijerinckii (strain ATCC 51743 / NCIMB 8052) (Clostridium acetobutylicum) protein is Large ribosomal subunit protein bL20.